Reading from the N-terminus, the 560-residue chain is Putative transport protein VS_1837 (560 aa).

5 consecutive transmembrane segments (helical) span residues 5 to 25 (VVLLLKQNPILLIFVVLSIGL), 37 to 57 (LGNSIGVLITSLIMGHLGFSF), 66 to 86 (FMLFIYCVGIEAGPNFFGIFF), 91 to 111 (HYLILSLVVLSTAIALTYFCS), and 155 to 175 (LGLVIENLSVGYAMAYLVGLI). RCK C-terminal domains are found at residues 203–292 (RGLG…FRNG) and 293–376 (KEVF…KIGF). 6 consecutive transmembrane segments (helical) span residues 386–406 (LTAFCSFFILGILFGLITMTF), 409–429 (VSFGLGNAVGLLLSGIMLGFL), 450–470 (LGLMFFMVGIGLSAGGKIFEH), 478–498 (VIGIALIVSVLPVFFAYLVGA), 506–526 (ALLFGAIIGARTCAPAMDIVN), and 539–559 (AGTYAIANILMTLAGTFIIII).

The protein belongs to the AAE transporter (TC 2.A.81) family. YbjL subfamily.

The protein resides in the cell membrane. The chain is Putative transport protein VS_1837 from Vibrio atlanticus (strain LGP32) (Vibrio splendidus (strain Mel32)).